Consider the following 146-residue polypeptide: Cyanate hydratase (146 aa).

Catalysis depends on residues arginine 87, glutamate 90, and serine 113.

Belongs to the cyanase family.

The enzyme catalyses cyanate + hydrogencarbonate + 3 H(+) = NH4(+) + 2 CO2. Its function is as follows. Catalyzes the reaction of cyanate with bicarbonate to produce ammonia and carbon dioxide. The polypeptide is Cyanate hydratase (Marinomonas sp. (strain MWYL1)).